A 332-amino-acid polypeptide reads, in one-letter code: CXADR-like membrane protein (332 aa).

The signal sequence occupies residues Met1 to Ala19. Ig-like C2-type domains follow at residues Gln20–Thr123 and Pro130–Thr220. Residues Gln20–Ala231 lie on the Extracellular side of the membrane. Disulfide bonds link Cys35/Cys109 and Cys151/Cys204. Asn193 is a glycosylation site (N-linked (GlcNAc...) asparagine). A helical transmembrane segment spans residues Gly232–Phe252. The Cytoplasmic portion of the chain corresponds to His253–Ile332. A disordered region spans residues Pro276–Ile332. Low complexity predominate over residues Ser285–Ser310. Over residues Pro320–Ile332 the composition is skewed to basic and acidic residues.

It is found in the cell junction. The protein localises to the tight junction. The protein resides in the cell membrane. The protein is CXADR-like membrane protein (clmp) of Xenopus tropicalis (Western clawed frog).